Reading from the N-terminus, the 309-residue chain is Protein FdhE homolog (309 aa).

The protein belongs to the FdhE family.

The protein resides in the cytoplasm. Necessary for formate dehydrogenase activity. This chain is Protein FdhE homolog, found in Serratia proteamaculans (strain 568).